The following is a 308-amino-acid chain: Probable manganese-dependent inorganic pyrophosphatase (308 aa).

Residues histidine 9, aspartate 13, aspartate 15, aspartate 75, histidine 97, and aspartate 149 each coordinate Mn(2+).

The protein belongs to the PPase class C family. It depends on Mn(2+) as a cofactor.

It is found in the cytoplasm. The enzyme catalyses diphosphate + H2O = 2 phosphate + H(+). The chain is Probable manganese-dependent inorganic pyrophosphatase from Listeria innocua serovar 6a (strain ATCC BAA-680 / CLIP 11262).